Reading from the N-terminus, the 316-residue chain is Galectin-8 (316 aa).

Galectin domains are found at residues 18-151 and 186-316; these read YVST…IGFR and FEAR…VRSW. The a carbohydrate site is built by Arg-68, Asn-78, and Glu-88. 248–254 is a binding site for a beta-D-galactoside; sequence WGEEERN.

In terms of assembly, homodimer. Interacts with CALCOCO2/NDP52. Interacts with PDPN; the interaction is glycosylation-dependent; may participate in connection of the lymphatic endothelium to the surrounding extracellular matrix. Expressed in liver, kidney, cardiac muscle, lung, and brain.

The protein resides in the cytoplasmic vesicle. It localises to the cytoplasm. It is found in the cytosol. Beta-galactoside-binding lectin that acts as a sensor of membrane damage caused by infection and restricts the proliferation of infecting pathogens by targeting them for autophagy. Detects membrane rupture by binding beta-galactoside ligands located on the lumenal side of the endosome membrane; these ligands becoming exposed to the cytoplasm following rupture. Restricts infection by initiating autophagy via interaction with CALCOCO2/NDP52. Required to restrict infection of bacterial invasion such as S.typhimurium. Also required to restrict infection of Picornaviridae viruses. Has a marked preference for 3'-O-sialylated and 3'-O-sulfated glycans. The protein is Galectin-8 (Lgals8) of Rattus norvegicus (Rat).